Consider the following 433-residue polypeptide: Probable M18 family aminopeptidase 2 (433 aa).

Residues histidine 84, histidine 161, and histidine 409 each contribute to the Zn(2+) site.

It belongs to the peptidase M18 family. Zn(2+) is required as a cofactor.

This Clostridium novyi (strain NT) protein is Probable M18 family aminopeptidase 2.